The primary structure comprises 206 residues: Large ribosomal subunit protein uL4 (206 aa).

This sequence belongs to the universal ribosomal protein uL4 family. Part of the 50S ribosomal subunit.

Functionally, one of the primary rRNA binding proteins, this protein initially binds near the 5'-end of the 23S rRNA. It is important during the early stages of 50S assembly. It makes multiple contacts with different domains of the 23S rRNA in the assembled 50S subunit and ribosome. Its function is as follows. Forms part of the polypeptide exit tunnel. In Methylocella silvestris (strain DSM 15510 / CIP 108128 / LMG 27833 / NCIMB 13906 / BL2), this protein is Large ribosomal subunit protein uL4.